Reading from the N-terminus, the 62-residue chain is Conotoxin Cal12.2e (62 aa).

The N-terminal stretch at 1–19 is a signal peptide; the sequence is MKLTCVLVVLLLVLPFGDL.

The protein belongs to the conotoxin O1 superfamily. In terms of processing, contains 4 disulfide bonds. Expressed by the venom duct.

The protein resides in the secreted. In terms of biological role, probable neurotoxin. This is Conotoxin Cal12.2e from Californiconus californicus (California cone).